Reading from the N-terminus, the 199-residue chain is Cytochrome c oxidase subunit 2 (199 aa).

A helical membrane pass occupies residues 1-13; that stretch reads AICSLVLYLLTLM. Residues 14–26 are Mitochondrial matrix-facing; the sequence is LMEKLSSNTVDAQ. Residues 27-54 form a helical membrane-spanning segment; it reads EVELIWTILPAIVLILLALPSLQILYMM. The Mitochondrial intermembrane segment spans residues 55–199; sequence DEIDEPDLTL…SSLLSISSSL (145 aa). Cu cation contacts are provided by His128, Cys163, Glu165, Cys167, His171, and Met174. Glu165 serves as a coordination point for Mg(2+).

The protein belongs to the cytochrome c oxidase subunit 2 family. As to quaternary structure, component of the cytochrome c oxidase (complex IV, CIV), a multisubunit enzyme composed of 14 subunits. The complex is composed of a catalytic core of 3 subunits MT-CO1, MT-CO2 and MT-CO3, encoded in the mitochondrial DNA, and 11 supernumerary subunits COX4I, COX5A, COX5B, COX6A, COX6B, COX6C, COX7A, COX7B, COX7C, COX8 and NDUFA4, which are encoded in the nuclear genome. The complex exists as a monomer or a dimer and forms supercomplexes (SCs) in the inner mitochondrial membrane with NADH-ubiquinone oxidoreductase (complex I, CI) and ubiquinol-cytochrome c oxidoreductase (cytochrome b-c1 complex, complex III, CIII), resulting in different assemblies (supercomplex SCI(1)III(2)IV(1) and megacomplex MCI(2)III(2)IV(2)). Found in a complex with TMEM177, COA6, COX18, COX20, SCO1 and SCO2. Interacts with TMEM177 in a COX20-dependent manner. Interacts with COX20. Interacts with COX16. It depends on Cu cation as a cofactor.

Its subcellular location is the mitochondrion inner membrane. The catalysed reaction is 4 Fe(II)-[cytochrome c] + O2 + 8 H(+)(in) = 4 Fe(III)-[cytochrome c] + 2 H2O + 4 H(+)(out). In terms of biological role, component of the cytochrome c oxidase, the last enzyme in the mitochondrial electron transport chain which drives oxidative phosphorylation. The respiratory chain contains 3 multisubunit complexes succinate dehydrogenase (complex II, CII), ubiquinol-cytochrome c oxidoreductase (cytochrome b-c1 complex, complex III, CIII) and cytochrome c oxidase (complex IV, CIV), that cooperate to transfer electrons derived from NADH and succinate to molecular oxygen, creating an electrochemical gradient over the inner membrane that drives transmembrane transport and the ATP synthase. Cytochrome c oxidase is the component of the respiratory chain that catalyzes the reduction of oxygen to water. Electrons originating from reduced cytochrome c in the intermembrane space (IMS) are transferred via the dinuclear copper A center (CU(A)) of subunit 2 and heme A of subunit 1 to the active site in subunit 1, a binuclear center (BNC) formed by heme A3 and copper B (CU(B)). The BNC reduces molecular oxygen to 2 water molecules using 4 electrons from cytochrome c in the IMS and 4 protons from the mitochondrial matrix. The protein is Cytochrome c oxidase subunit 2 (MT-CO2) of Casuarius bennetti (Dwarf cassowary).